Consider the following 332-residue polypeptide: tRNA-dihydrouridine synthase B (332 aa).

FMN is bound by residues 16 to 18 and Gln-70; that span reads PMA. The active-site Proton donor is the Cys-100. Residues Lys-139, 200 to 202, and 224 to 225 contribute to the FMN site; these read NGD and GR.

It belongs to the Dus family. DusB subfamily. Requires FMN as cofactor.

It carries out the reaction a 5,6-dihydrouridine in tRNA + NAD(+) = a uridine in tRNA + NADH + H(+). The enzyme catalyses a 5,6-dihydrouridine in tRNA + NADP(+) = a uridine in tRNA + NADPH + H(+). Catalyzes the synthesis of 5,6-dihydrouridine (D), a modified base found in the D-loop of most tRNAs, via the reduction of the C5-C6 double bond in target uridines. The protein is tRNA-dihydrouridine synthase B of Xanthomonas campestris pv. campestris (strain ATCC 33913 / DSM 3586 / NCPPB 528 / LMG 568 / P 25).